The chain runs to 393 residues: Mitogen-activated protein kinase SIPK (393 aa).

Polar residues predominate over residues 1–11; that stretch reads MDGSGQQTDTM. Positions 1-31 are disordered; the sequence is MDGSGQQTDTMMSDAGAEQPPPAPQPVAGMD. In terms of domain architecture, Protein kinase spans 60-345; the sequence is KPPILPIGKG…VEGALAHPYL (286 aa). Residues 66-74 and Lys89 each bind ATP; that span reads IGKGAYGIV. The active-site Proton acceptor is Asp186. A TXY motif is present at residues 218 to 220; that stretch reads TEY.

This sequence belongs to the protein kinase superfamily. CMGC Ser/Thr protein kinase family. MAP kinase subfamily. As to quaternary structure, interacts with SIPKK.

The enzyme catalyses L-tyrosyl-[protein] + ATP = O-phospho-L-tyrosyl-[protein] + ADP + H(+). It catalyses the reaction L-seryl-[protein] + ATP = O-phospho-L-seryl-[protein] + ADP + H(+). It carries out the reaction L-threonyl-[protein] + ATP = O-phospho-L-threonyl-[protein] + ADP + H(+). Its activity is regulated as follows. Activated by threonine and tyrosine phosphorylation. Phosphorylates myelin basic protein (MBP) in vitro. May be involved in disease resistance. The protein is Mitogen-activated protein kinase SIPK of Nicotiana tabacum (Common tobacco).